The sequence spans 427 residues: V-type proton ATPase subunit C 2 (427 aa).

Residues 298–320 (PLGNPARPAAGQTDRDRESEGEG) are disordered.

This sequence belongs to the V-ATPase C subunit family. In terms of assembly, V-ATPase is a heteromultimeric enzyme made up of two complexes: the ATP-hydrolytic V1 complex and the proton translocation V0 complex. The V1 complex consists of three catalytic AB heterodimers that form a heterohexamer, three peripheral stalks each consisting of EG heterodimers, one central rotor including subunits D and F, and the regulatory subunits C and H. The proton translocation complex V0 consists of the proton transport subunit a, a ring of proteolipid subunits c9c'', rotary subunit d, subunits e and f, and the accessory subunits ATP6AP1/Ac45 and ATP6AP2/PRR. As to expression, predominantly expressed in the lung and kidney. Isoform 1 is lung-specific while isoform 3 is a kidney-specific isoform. Isoform 1 is localized in the lamellar bodies of type II alveolar cells. Isoform 2 is strongly expressed in the cortical and medulla collecting ducts and is found in the plasma membranes of renal alpha and beta intercalated cells.

In terms of biological role, subunit of the V1 complex of vacuolar(H+)-ATPase (V-ATPase), a multisubunit enzyme composed of a peripheral complex (V1) that hydrolyzes ATP and a membrane integral complex (V0) that translocates protons. V-ATPase is responsible for acidifying and maintaining the pH of intracellular compartments and in some cell types, is targeted to the plasma membrane, where it is responsible for acidifying the extracellular environment. Subunit C is necessary for the assembly of the catalytic sector of the enzyme and is likely to have a specific function in its catalytic activity. This chain is V-type proton ATPase subunit C 2 (Atp6v1c2), found in Mus musculus (Mouse).